The chain runs to 1382 residues: DNA-directed RNA polymerase subunit beta'' (1382 aa).

The Zn(2+) site is built by cysteine 224, cysteine 294, cysteine 301, and cysteine 304.

It belongs to the RNA polymerase beta' chain family. RpoC2 subfamily. In terms of assembly, in plastids the minimal PEP RNA polymerase catalytic core is composed of four subunits: alpha, beta, beta', and beta''. When a (nuclear-encoded) sigma factor is associated with the core the holoenzyme is formed, which can initiate transcription. Zn(2+) serves as cofactor.

The protein localises to the plastid. It localises to the chloroplast. It catalyses the reaction RNA(n) + a ribonucleoside 5'-triphosphate = RNA(n+1) + diphosphate. DNA-dependent RNA polymerase catalyzes the transcription of DNA into RNA using the four ribonucleoside triphosphates as substrates. This is DNA-directed RNA polymerase subunit beta'' from Dioscorea elephantipes (Elephant's foot yam).